The chain runs to 97 residues: MKLTTVLVVALLVLAACQFTVTDNSGDDPENPSLRSVGENQNPDSTKTITAWATRDMTNMRRGLNRPSKRCLAGSARCEFHKPSSCCSGHCIFWWCA.

An N-terminal signal peptide occupies residues 1–22 (MKLTTVLVVALLVLAACQFTVT). The tract at residues 23–46 (DNSGDDPENPSLRSVGENQNPDST) is disordered. Residues 23 to 68 (DNSGDDPENPSLRSVGENQNPDSTKTITAWATRDMTNMRRGLNRPS) constitute a propeptide that is removed on maturation. Cystine bridges form between cysteine 71–cysteine 87, cysteine 78–cysteine 91, and cysteine 86–cysteine 96.

Belongs to the conotoxin O1 superfamily. As to expression, expressed by the venom duct.

The protein localises to the secreted. Functionally, probable neurotoxin with unknown target. Possibly targets ion channels. This is Conotoxin Cal6.1a from Californiconus californicus (California cone).